The following is a 182-amino-acid chain: Endoribonuclease YbeY (182 aa).

Zn(2+) is bound by residues histidine 115, histidine 119, and histidine 125.

The protein belongs to the endoribonuclease YbeY family. Requires Zn(2+) as cofactor.

Its subcellular location is the cytoplasm. Functionally, single strand-specific metallo-endoribonuclease involved in late-stage 70S ribosome quality control and in maturation of the 3' terminus of the 16S rRNA. The protein is Endoribonuclease YbeY of Bifidobacterium longum (strain NCC 2705).